A 23-amino-acid polypeptide reads, in one-letter code: Lycosin-II (23 aa).

Leu21 is subject to Leucine amide.

As to expression, expressed by the venom gland.

The protein localises to the secreted. It localises to the target cell membrane. In terms of biological role, has strong antibacterial activity and biofilm inhibition effects against Gram-positive and -negative bacteria including E.coli, S.epidermidis, and A.baumannii and oxacillin-resistant S.aureus and meropenem-resistant P.aeruginosa. Is not cytotoxic against human foreskin fibroblast Hs27 or hemolytic against mammalian red blood cells. Its mechanism of action involves binding to lipoteichoic acid and lipopolysaccharide of Gram-positive and Gram-negative bacterial membranes, respectively, to destroy the bacterial membrane. In addition, it shows anti-inflammatory effects by inhibiting the expression of pro-inflammatory cytokines that are increased during bacterial infection in Hs27 cells. In Lycosa singoriensis (Wolf spider), this protein is Lycosin-II.